The primary structure comprises 314 residues: MTASLTTKFLNNTYENPFMNASGVHCMTTEELDELADSKAGAFITKSATTLEREGNPKPRYISVPLGSINSMGLPNEGIDYYLSYVLNRQKKYPDAPAIFFSVAGMSIDENLNLLKKIQDSEFNGITELNLSCPNVPGKPQVAYDFELTKETLEKVFVFFKKPLGIKLPPYFDFAHFDIIAKILNEFPLAYVNSINSIGNGLFIDVEKESVVVKPKNGFGGIGGEYVKPTALANVRAFYTRLRPDIKVIGTGGIKSGKDAFEHLLCGASMLQIGTELQKEGVKIFERIEKELKDIMEAKGYTSIDQFRGKLNSL.

Residues K46, 70 to 74 (NSMGL), and N130 each bind substrate. An FMN-binding site is contributed by 46–47 (KS). FMN is bound at residue N130. Catalysis depends on nucleophile residues S132 and C133. K167 and I195 together coordinate FMN. 196 to 197 (NS) serves as a coordination point for substrate. Residues G224, 252–253 (GG), and 274–275 (GT) contribute to the FMN site.

This sequence belongs to the dihydroorotate dehydrogenase family. Type 1 subfamily. In terms of assembly, homodimer. FMN is required as a cofactor.

Its subcellular location is the cytoplasm. The catalysed reaction is (S)-dihydroorotate + fumarate = orotate + succinate. Its pathway is pyrimidine metabolism; UMP biosynthesis via de novo pathway. In terms of biological role, catalyzes the conversion of dihydroorotate to orotate with fumarate as the electron acceptor. The chain is Dihydroorotate dehydrogenase (fumarate) (URA1) from Saccharomyces mikatae (Yeast).